Reading from the N-terminus, the 92-residue chain is PqqA binding protein (92 aa).

It belongs to the PqqD family. As to quaternary structure, monomer. Interacts with PqqE.

It participates in cofactor biosynthesis; pyrroloquinoline quinone biosynthesis. Its function is as follows. Functions as a PqqA binding protein and presents PqqA to PqqE, in the pyrroloquinoline quinone (PQQ) biosynthetic pathway. In Xanthomonas campestris pv. campestris (strain 8004), this protein is PqqA binding protein.